Consider the following 146-residue polypeptide: uncharacterized protein (146 aa).

A helical transmembrane segment spans residues 7-27 (FVLSITIVLVILIIIAFIWYN).

This sequence belongs to the asfivirus E146L family.

The protein resides in the host membrane. It localises to the virion. This is an uncharacterized protein from African swine fever virus (strain Badajoz 1971 Vero-adapted) (Ba71V).